The primary structure comprises 444 residues: Citrate-proton symporter (444 aa).

Residues 1 to 41 (MPTARCSMRASSTAPVRMMATAGGARIGAILRVTSGNFLEQ) are Cytoplasmic-facing. A helical transmembrane segment spans residues 42-62 (FDFFLFGFYATYIAHTFFPAS). Residues 63-72 (SEFASLMMTF) are Periplasmic-facing. Residues 73 to 93 (AVFGAGFLMRPIGAIVLGAYI) traverse the membrane as a helical segment. Residues 94–114 (DKVGRRKGLIVTLSIMATGTF) lie on the Cytoplasmic side of the membrane. Residues 115-135 (LIVLIPSYQTIGLWAPLLVLI) form a helical membrane-spanning segment. Topologically, residues 136 to 137 (GR) are periplasmic. Residues 138-158 (LLQGFSAGAELGGVSVYLAEI) form a helical membrane-spanning segment. The Cytoplasmic segment spans residues 159–177 (ATPGRKGFYTSWQSGSQQV). Residues 178–198 (AIMVAAAMGFALNAVLEPSAI) traverse the membrane as a helical segment. A topological domain (periplasmic) is located at residue S199. A helical transmembrane segment spans residues 200–220 (DWGWRIPFLFGVLIVPFIFIL). Residues 221–251 (RRKLEETQEFTARRHHLAMRQVFATLLANWQ) are Cytoplasmic-facing. A helical membrane pass occupies residues 252–272 (VVIAGMMMVAMTTTAFYLITV). Over 273–289 (YAPTFGKKVLMLSASDS) the chain is Periplasmic. Residues 290 to 310 (LLVTLLVAISNFFWLPVGGAL) form a helical membrane-spanning segment. Residues 311–318 (SDRFGRRS) lie on the Cytoplasmic side of the membrane. The chain crosses the membrane as a helical span at residues 319–339 (VLIAMTLLALATAWPALTMLA). Position 340 (N340) is a topological domain, periplasmic. The chain crosses the membrane as a helical span at residues 341–361 (APSFLMMLSVLLWLSFIYGMY). Over 362–379 (NGAMIPALTEIMPAEVRV) the chain is Cytoplasmic. A helical membrane pass occupies residues 380–400 (AGFSLAYSLATAVFGGFTPVI). Residues 401-411 (STALIEYTGDK) are Periplasmic-facing. The chain crosses the membrane as a helical span at residues 412–432 (ASPGYWMSFAAICGLLATCYL). Residues 433–444 (YRRSAVALQTAR) lie on the Cytoplasmic side of the membrane.

The protein belongs to the major facilitator superfamily. Metabolite:H+ Symporter (MHS) family (TC 2.A.1.6) family.

The protein resides in the cell inner membrane. In terms of biological role, uptake of citrate across the boundary membrane with the concomitant transport of protons into the cell (symport system). The protein is Citrate-proton symporter (citH) of Klebsiella pneumoniae.